We begin with the raw amino-acid sequence, 129 residues long: Glycine cleavage system H protein (129 aa).

In terms of domain architecture, Lipoyl-binding spans 24 to 106; the sequence is VFTVGISEHA…YGDGWLFKIK (83 aa). Position 65 is an N6-lipoyllysine (K65).

Belongs to the GcvH family. The glycine cleavage system is composed of four proteins: P, T, L and H. The cofactor is (R)-lipoate.

In terms of biological role, the glycine cleavage system catalyzes the degradation of glycine. The H protein shuttles the methylamine group of glycine from the P protein to the T protein. This Alteromonas mediterranea (strain DSM 17117 / CIP 110805 / LMG 28347 / Deep ecotype) protein is Glycine cleavage system H protein.